Consider the following 429-residue polypeptide: Glutamyl-tRNA reductase (429 aa).

Substrate contacts are provided by residues 49–52 (TCNR), Ser107, 112–114 (EPQ), and Gln118. Cys50 (nucleophile) is an active-site residue. 187 to 192 (GAGETI) provides a ligand contact to NADP(+).

It belongs to the glutamyl-tRNA reductase family. In terms of assembly, homodimer.

The enzyme catalyses (S)-4-amino-5-oxopentanoate + tRNA(Glu) + NADP(+) = L-glutamyl-tRNA(Glu) + NADPH + H(+). It participates in porphyrin-containing compound metabolism; protoporphyrin-IX biosynthesis; 5-aminolevulinate from L-glutamyl-tRNA(Glu): step 1/2. In terms of biological role, catalyzes the NADPH-dependent reduction of glutamyl-tRNA(Glu) to glutamate 1-semialdehyde (GSA). This Pseudomonas fluorescens (strain SBW25) protein is Glutamyl-tRNA reductase.